The sequence spans 201 residues: Reticulon-like protein B10 (201 aa).

In terms of domain architecture, Reticulon spans 14–201 (VADLIMWKNR…KPTNKIKKMQ (188 aa)). Transmembrane regions (helical) follow at residues 25-45 (GGFL…KCGY), 46-66 (SFFP…FLWA), and 135-155 (FLNF…IPFL).

It localises to the endoplasmic reticulum membrane. This is Reticulon-like protein B10 (RTNLB10) from Arabidopsis thaliana (Mouse-ear cress).